A 249-amino-acid polypeptide reads, in one-letter code: Ditrans,polycis-undecaprenyl-diphosphate synthase ((2E,6E)-farnesyl-diphosphate specific) (249 aa).

D18 is an active-site residue. Residue D18 coordinates Mg(2+). Residues 19–22, F23, K31, H35, and 63–65 each bind substrate; these read GNNR and SSE. The Proton acceptor role is filled by N66. Substrate is bound by residues W67, R69, R186, and 192–194; that span reads RLS. A Mg(2+)-binding site is contributed by E205.

The protein belongs to the UPP synthase family. In terms of assembly, homodimer. Mg(2+) is required as a cofactor.

The catalysed reaction is 8 isopentenyl diphosphate + (2E,6E)-farnesyl diphosphate = di-trans,octa-cis-undecaprenyl diphosphate + 8 diphosphate. Functionally, catalyzes the sequential condensation of isopentenyl diphosphate (IPP) with (2E,6E)-farnesyl diphosphate (E,E-FPP) to yield (2Z,6Z,10Z,14Z,18Z,22Z,26Z,30Z,34E,38E)-undecaprenyl diphosphate (di-trans,octa-cis-UPP). UPP is the precursor of glycosyl carrier lipid in the biosynthesis of bacterial cell wall polysaccharide components such as peptidoglycan and lipopolysaccharide. In Acinetobacter baylyi (strain ATCC 33305 / BD413 / ADP1), this protein is Ditrans,polycis-undecaprenyl-diphosphate synthase ((2E,6E)-farnesyl-diphosphate specific).